We begin with the raw amino-acid sequence, 478 residues long: MVRAQWKVIILLILLMVIPSDGLFHSIYRSILVAQPFKGNAGQPLFLSPYIRTGKIKEGQRKSMVSPFPGMYDKSYAGYITVNQTYNSNLFFWFFPARTQPADAPVVLWLQGGPGGSSMFGLFVEHGPYIITSNMTVLSRDFPWTFSLSMLYIDNPVGTGFSFTDHIQGYAIDEDDVAQDLYSALVQFFKLFPEYAKNDFYITGESYAGKYVPAIAYYIHSLNPVRRFKIRLKGIALGDAYTDPETIIGGYATFLYEVGLLDEQQRRHFRKQCRKCIKYIKEQEWMKAFEVLDELLDGDLTAGPSFFQNVTGCTNYYNILQCTEPEDQSYFSKFLSLPQVRQAIHVGNRNFSDGAEVEKYLREDTVKSVKPWLAEIMNYYKVLIYNGQLDIIVAAALTERSLMTMDWKGSYAYRRTHKKIWKIFESDDEVAGYVRRVGKFHQVIVRGGGHILPYDQPLRSFDMINRFIYDRGWEPYKL.

Residues 1 to 22 form the signal peptide; that stretch reads MVRAQWKVIILLILLMVIPSDG. N83 and N134 each carry an N-linked (GlcNAc...) asparagine glycan. S206 is an active-site residue. Residues N309 and N350 are each glycosylated (N-linked (GlcNAc...) asparagine). Residues D390 and H450 contribute to the active site.

It belongs to the peptidase S10 family.

Its function is as follows. May be involved in the digestion of phagocytosed particles in the lysosome, participation in an inflammatory protease cascade, and trimming of peptides for antigen presentation. This is Probable serine carboxypeptidase CPVL (CPVL) from Rattus norvegicus (Rat).